The primary structure comprises 399 residues: Zinc finger HIT domain-containing protein 2 (399 aa).

Position 1 is an N-acetylmethionine (methionine 1). Zn(2+)-binding residues include cysteine 7, cysteine 10, cysteine 22, cysteine 25, cysteine 30, cysteine 34, histidine 38, and cysteine 41. An HIT-type zinc finger spans residues 7–41; that stretch reads CGFCPAGEALPARYTCPRCNAPYCSLRCYRAHGAC. Disordered stretches follow at residues 70–97 and 152–175; these read RLREQREAEDEPEEAGLGPGARPGGLSG and AEPEPAPARTALQSGDDAAAAEPF. The span at 86–96 shows a compositional bias: gly residues; the sequence is LGPGARPGGLS. Threonine 161 carries the post-translational modification Phosphothreonine.

As to quaternary structure, interacts (via HIT-type zinc finger) with RUVBL2 in the presence of ATP or ADP; shows a stronger interaction in the presence of ADP. Low expression in most tissues; highly expressed in testis; particularly in seminiferous tubules.

May act as a bridging factor mediating the interaction between the R2TP/Prefoldin-like (R2TP/PFDL) complex and U5 small nuclear ribonucleoprotein (U5 snRNP). Required for the interaction of R2TP complex subunit RPAP3 and prefoldin-like subunit URI1 with U5 snRNP proteins EFTUD2 and PRPF8. May play a role in regulating the composition of the U5 snRNP complex. The chain is Zinc finger HIT domain-containing protein 2 (Znhit2) from Mus musculus (Mouse).